The sequence spans 535 residues: RNA-splicing ligase RtcB homolog 1 (535 aa).

Over residues Met1–Gln16 the composition is skewed to basic residues. A disordered region spans residues Met1–Ser29. Asp152, Cys155, His260, His292, and His383 together coordinate Mn(2+). Asn259 to Glu263 contributes to the GMP binding site. GMP contacts are provided by residues His383–Asn384, Gly432–Met435, Ser439, His458–Gly461, and Lys534. The active-site GMP-histidine intermediate is the His458.

This sequence belongs to the RtcB family. Catalytic component of the tRNA-splicing ligase complex. Mn(2+) serves as cofactor.

It catalyses the reaction a 3'-end 3'-phospho-ribonucleotide-RNA + a 5'-end dephospho-ribonucleoside-RNA + GTP = a ribonucleotidyl-ribonucleotide-RNA + GMP + diphosphate. The enzyme catalyses a 3'-end 2',3'-cyclophospho-ribonucleotide-RNA + a 5'-end dephospho-ribonucleoside-RNA + GTP + H2O = a ribonucleotidyl-ribonucleotide-RNA + GMP + diphosphate + H(+). Functionally, catalytic subunit of the tRNA-splicing ligase complex that acts by directly joining spliced tRNA halves to mature-sized tRNAs by incorporating the precursor-derived splice junction phosphate into the mature tRNA as a canonical 3',5'-phosphodiester. May act as an RNA ligase with broad substrate specificity, and may function toward other RNAs. In Entamoeba dispar (strain ATCC PRA-260 / SAW760), this protein is RNA-splicing ligase RtcB homolog 1.